Reading from the N-terminus, the 30-residue chain is Acidic phospholipase A2 homolog cannitoxin gamma chain (30 aa).

Heterotrimer of alpha, beta, and gamma chains; non-covalently linked. Post-translationally, glycosylated. Expressed by the venom gland.

It localises to the secreted. In terms of biological role, heterotrimer: Snake venom phospholipase A2 (PLA2) heterotrimer that acts as a potent presynaptic neurotoxin by blocking synaptic transmission and synaptic vesicle recycling. Enzymatic activity is essential for the neurotoxic effects. May act by binding in a calcium-dependent fashion to neurotonal pentraxin-1 (NPTX1) and neurotonal pentraxin-2 (NPTX2), but not to neuronal pentraxin receptor (NPTXR). Also binds to taipoxin-associated calcium binding protein 49 (RCN2), a protein localized in the lumen of endoplasmic reticulum. Its function is as follows. Monomer (gamma chain): Snake venom phospholipase A2 homolog that is neither toxic nor enzymatically active. Does not bind calcium. This Oxyuranus scutellatus canni (Papuan taipan) protein is Acidic phospholipase A2 homolog cannitoxin gamma chain.